Here is a 356-residue protein sequence, read N- to C-terminus: DNA polymerase IV (356 aa).

One can recognise a UmuC domain in the interval 6-187 (IIHIDMDAFY…QPIRRLHGVG (182 aa)). Residues D10 and D105 each contribute to the Mg(2+) site. Residue E106 is part of the active site.

It belongs to the DNA polymerase type-Y family. Monomer. It depends on Mg(2+) as a cofactor.

Its subcellular location is the cytoplasm. It catalyses the reaction DNA(n) + a 2'-deoxyribonucleoside 5'-triphosphate = DNA(n+1) + diphosphate. Its function is as follows. Poorly processive, error-prone DNA polymerase involved in untargeted mutagenesis. Copies undamaged DNA at stalled replication forks, which arise in vivo from mismatched or misaligned primer ends. These misaligned primers can be extended by PolIV. Exhibits no 3'-5' exonuclease (proofreading) activity. May be involved in translesional synthesis, in conjunction with the beta clamp from PolIII. The polypeptide is DNA polymerase IV (Halorhodospira halophila (strain DSM 244 / SL1) (Ectothiorhodospira halophila (strain DSM 244 / SL1))).